A 729-amino-acid chain; its full sequence is Phosphoribosylformylglycinamidine synthase subunit PurL (729 aa).

Residue His54 is part of the active site. Tyr57 and Lys96 together coordinate ATP. Glu98 is a Mg(2+) binding site. Substrate is bound by residues 99–102 (SHNH) and Arg121. His100 (proton acceptor) is an active-site residue. Asp122 contacts Mg(2+). Position 245 (Gln245) interacts with substrate. Asp273 serves as a coordination point for Mg(2+). 317–319 (ETQ) serves as a coordination point for substrate. ATP contacts are provided by Asp495 and Gly532. Asn533 lines the Mg(2+) pocket. Ser535 contacts substrate.

This sequence belongs to the FGAMS family. In terms of assembly, monomer. Part of the FGAM synthase complex composed of 1 PurL, 1 PurQ and 2 PurS subunits.

It is found in the cytoplasm. It carries out the reaction N(2)-formyl-N(1)-(5-phospho-beta-D-ribosyl)glycinamide + L-glutamine + ATP + H2O = 2-formamido-N(1)-(5-O-phospho-beta-D-ribosyl)acetamidine + L-glutamate + ADP + phosphate + H(+). The protein operates within purine metabolism; IMP biosynthesis via de novo pathway; 5-amino-1-(5-phospho-D-ribosyl)imidazole from N(2)-formyl-N(1)-(5-phospho-D-ribosyl)glycinamide: step 1/2. Functionally, part of the phosphoribosylformylglycinamidine synthase complex involved in the purines biosynthetic pathway. Catalyzes the ATP-dependent conversion of formylglycinamide ribonucleotide (FGAR) and glutamine to yield formylglycinamidine ribonucleotide (FGAM) and glutamate. The FGAM synthase complex is composed of three subunits. PurQ produces an ammonia molecule by converting glutamine to glutamate. PurL transfers the ammonia molecule to FGAR to form FGAM in an ATP-dependent manner. PurS interacts with PurQ and PurL and is thought to assist in the transfer of the ammonia molecule from PurQ to PurL. The polypeptide is Phosphoribosylformylglycinamidine synthase subunit PurL (Staphylococcus aureus (strain bovine RF122 / ET3-1)).